A 537-amino-acid polypeptide reads, in one-letter code: Hexahomomethionine N-hydroxylase (537 aa).

A helical transmembrane segment spans residues 7-27; the sequence is FNTCFQILLGFIVFIASITLL.

Belongs to the cytochrome P450 family. Heme is required as a cofactor. Highly expressed in hypocotyl and roots. Lower expression in siliques, stems and leaves. Barely detectable in flowers. Expressed only in the vascular bundles in apical plant parts.

The protein resides in the endoplasmic reticulum membrane. It catalyses the reaction L-hexahomomethionine + 2 reduced [NADPH--hemoprotein reductase] + 2 O2 = (E)-9-(methylsulfanyl)nonanal oxime + 2 oxidized [NADPH--hemoprotein reductase] + CO2 + 3 H2O + 2 H(+). The catalysed reaction is L-pentahomomethionine + 2 reduced [NADPH--hemoprotein reductase] + 2 O2 = (E)-8-(methylsulfanyl)octanal oxime + 2 oxidized [NADPH--hemoprotein reductase] + CO2 + 3 H2O + 2 H(+). The enzyme catalyses an L-polyhomomethionine + 2 reduced [NADPH--hemoprotein reductase] + 2 O2 = an (E)-omega-(methylsulfanyl)-alkanal oxime + 2 oxidized [NADPH--hemoprotein reductase] + CO2 + 3 H2O + 2 H(+). Functionally, catalyzes the conversion of the long chain elongated methionines penta- and hexahomomethionine to their corresponding aldoximes 8-methylthiooctanaldoxime and 9-methylthiononanaldoxime. The polypeptide is Hexahomomethionine N-hydroxylase (CYP79F2) (Arabidopsis thaliana (Mouse-ear cress)).